Here is a 494-residue protein sequence, read N- to C-terminus: Glutamyl-tRNA(Gln) amidotransferase subunit A (494 aa).

Active-site charge relay system residues include Lys88 and Ser163. The active-site Acyl-ester intermediate is Ser187.

Belongs to the amidase family. GatA subfamily. Heterotrimer of A, B and C subunits.

The enzyme catalyses L-glutamyl-tRNA(Gln) + L-glutamine + ATP + H2O = L-glutaminyl-tRNA(Gln) + L-glutamate + ADP + phosphate + H(+). Functionally, allows the formation of correctly charged Gln-tRNA(Gln) through the transamidation of misacylated Glu-tRNA(Gln) in organisms which lack glutaminyl-tRNA synthetase. The reaction takes place in the presence of glutamine and ATP through an activated gamma-phospho-Glu-tRNA(Gln). In Corynebacterium diphtheriae (strain ATCC 700971 / NCTC 13129 / Biotype gravis), this protein is Glutamyl-tRNA(Gln) amidotransferase subunit A.